The chain runs to 125 residues: Large ribosomal subunit protein bL12 (125 aa).

The protein belongs to the bacterial ribosomal protein bL12 family. As to quaternary structure, homodimer. Part of the ribosomal stalk of the 50S ribosomal subunit. Forms a multimeric L10(L12)X complex, where L10 forms an elongated spine to which 2 to 4 L12 dimers bind in a sequential fashion. Binds GTP-bound translation factors.

Its function is as follows. Forms part of the ribosomal stalk which helps the ribosome interact with GTP-bound translation factors. Is thus essential for accurate translation. In Sphingopyxis alaskensis (strain DSM 13593 / LMG 18877 / RB2256) (Sphingomonas alaskensis), this protein is Large ribosomal subunit protein bL12.